We begin with the raw amino-acid sequence, 63 residues long: Crotasin (63 aa).

The first 22 residues, 1 to 22 (MKILYLLSAFLFLAFLSESGNA), serve as a signal peptide directing secretion. 3 disulfides stabilise this stretch: Cys-26–Cys-56, Cys-33–Cys-50, and Cys-38–Cys-57.

Highly expressed in pancreas, heart, liver, brain and kidney. Expressed to a low extent in the venom gland.

Its subcellular location is the secreted. The chain is Crotasin from Crotalus durissus terrificus (South American rattlesnake).